We begin with the raw amino-acid sequence, 267 residues long: 2-keto-3-deoxy-L-rhamnonate aldolase (267 aa).

The active-site Proton acceptor is His-49. Substrate is bound at residue Gln-151. Residue Glu-153 coordinates Mg(2+). Positions 178 and 179 each coordinate substrate. Asp-179 is a Mg(2+) binding site.

It belongs to the HpcH/HpaI aldolase family. KDR aldolase subfamily. Homohexamer. Mg(2+) is required as a cofactor.

The enzyme catalyses 2-dehydro-3-deoxy-L-rhamnonate = (S)-lactaldehyde + pyruvate. Catalyzes the reversible retro-aldol cleavage of 2-keto-3-deoxy-L-rhamnonate (KDR) to pyruvate and lactaldehyde. The chain is 2-keto-3-deoxy-L-rhamnonate aldolase from Escherichia coli (strain UTI89 / UPEC).